Consider the following 207-residue polypeptide: Cytochrome c biogenesis ATP-binding export protein CcmA (207 aa).

Residues 4-207 (LEARELLCER…RISLTQTGAA (204 aa)) enclose the ABC transporter domain. 36–43 (GSNGAGKT) lines the ATP pocket.

It belongs to the ABC transporter superfamily. CcmA exporter (TC 3.A.1.107) family. As to quaternary structure, the complex is composed of two ATP-binding proteins (CcmA) and two transmembrane proteins (CcmB).

The protein localises to the cell inner membrane. The catalysed reaction is heme b(in) + ATP + H2O = heme b(out) + ADP + phosphate + H(+). Functionally, part of the ABC transporter complex CcmAB involved in the biogenesis of c-type cytochromes; once thought to export heme, this seems not to be the case, but its exact role is uncertain. Responsible for energy coupling to the transport system. This is Cytochrome c biogenesis ATP-binding export protein CcmA from Escherichia coli (strain UTI89 / UPEC).